The chain runs to 635 residues: Peptidyl-prolyl cis-trans isomerase PASTICCINO1 (635 aa).

Residues 1 to 10 are compositionally biased toward polar residues; the sequence is MAVGDQTEQN. The interval 1 to 28 is disordered; the sequence is MAVGDQTEQNYLPKKKKSETEDDKRRKK. 3 consecutive PPIase FKBP-type domains span residues 51–147, 175–260, and 291–383; these read GDQV…LDFS, PYEV…VHFI, and DSRL…LGFE. 3 TPR repeats span residues 400 to 433, 449 to 482, and 483 to 516; these read ADKI…FNHV, NMLH…KPGH, and VKGL…DKSS. A calmodulin-binding region spans residues 530-546; it reads KEQEAESKARKQFKGLF. A compositionally biased stretch (acidic residues) spans 569–586; the sequence is EVDETKDNDDDETLEEEG. The interval 569-593 is disordered; sequence EVDETKDNDDDETLEEEGATTVSTE. The helical; Anchor for type IV membrane protein transmembrane segment at 609–629 threads the bilayer; sequence VMLQIGIQLGVVLIGILIFQF.

It belongs to the FKBP-type PPIase family. Interacts with calmodulin (CaM). Interacts with RPM1 and NAC089. Interacts with the elongase complex core members KCR1, PAS2 and CER10. Expressed ubiquitously.

It localises to the endoplasmic reticulum membrane. Its subcellular location is the cytoplasm. It is found in the nucleus. It catalyses the reaction [protein]-peptidylproline (omega=180) = [protein]-peptidylproline (omega=0). PPIases accelerate the folding of proteins. It catalyzes the cis-trans isomerization of proline imidic peptide bonds in oligopeptides. Essential protein regulating cell division, adhesion and elongation throughout the plant development and embryogenesis. Required for the spatial organization of apical meristems. Involved in the hormonal control of cell division and differentiation mediated by cytokinins and auxin. Regulates the function of NAC089 transcription factor by controlling its targeting to the nucleus upon plant cell division. Interacts with enzymes of the fatty acid elongase complex and favors the generation of very-long-chain fatty acids (VLCFAs) required for polar auxin transport and tissue patterning during plant development. The chain is Peptidyl-prolyl cis-trans isomerase PASTICCINO1 (PAS1) from Arabidopsis thaliana (Mouse-ear cress).